We begin with the raw amino-acid sequence, 328 residues long: Glycerol-3-phosphate dehydrogenase [NAD(P)+] (328 aa).

3 residues coordinate NADPH: Trp11, Arg30, and Lys103. The sn-glycerol 3-phosphate site is built by Lys103, Gly132, and Ser134. Ala136 serves as a coordination point for NADPH. 5 residues coordinate sn-glycerol 3-phosphate: Lys187, Asp240, Ser250, Arg251, and Asn252. The active-site Proton acceptor is the Lys187. Arg251 is an NADPH binding site. Residues Val275 and Glu277 each coordinate NADPH.

The protein belongs to the NAD-dependent glycerol-3-phosphate dehydrogenase family.

It is found in the cytoplasm. It carries out the reaction sn-glycerol 3-phosphate + NAD(+) = dihydroxyacetone phosphate + NADH + H(+). The enzyme catalyses sn-glycerol 3-phosphate + NADP(+) = dihydroxyacetone phosphate + NADPH + H(+). The protein operates within membrane lipid metabolism; glycerophospholipid metabolism. Functionally, catalyzes the reduction of the glycolytic intermediate dihydroxyacetone phosphate (DHAP) to sn-glycerol 3-phosphate (G3P), the key precursor for phospholipid synthesis. The sequence is that of Glycerol-3-phosphate dehydrogenase [NAD(P)+] from Thiobacillus denitrificans (strain ATCC 25259 / T1).